The following is a 384-amino-acid chain: Signal peptide peptidase-like 3 (384 aa).

Residues 1–8 (MAEQTYSW) lie on the Lumenal side of the membrane. The chain crosses the membrane as a helical span at residues 9–29 (AYSLVDSSQVSTFLISILLIV). Over 30 to 73 (YGSFRSLNMDFENQDKEKDSNSSSGSFNGNSTNNSIQTIDSTQA) the chain is Cytoplasmic. A helical membrane pass occupies residues 74 to 94 (LFLPIGASVSLLVMFFFFDSV). Residue Gln95 is a topological domain, lumenal. Residues 96 to 116 (VVFTICTAVLATIAFAFLLLP) traverse the membrane as a helical segment. At 117-138 (MCQYLTRPCSPQNKISFGCCGR) the chain is on the cytoplasmic side. Residues 139–159 (FTAAELLSFSLSVMLVLIWVL) form a helical membrane-spanning segment. Residues 160 to 164 (TGHWL) are Lumenal-facing. A helical membrane pass occupies residues 165-185 (LMDALAMGLCVAMIAFVRLPS). At 186–190 (LKVSC) the chain is on the cytoplasmic side. Residues 191-211 (LLLSGLLIYDVFWVFFSAYIF) form a helical membrane-spanning segment. The active site involves Asp200. Residues 212-262 (NSNVMVKVATQPADNPLDVLSRKLHLGPNVGRDVPRLSLPGKLVFPSSTGS) lie on the Lumenal side of the membrane. Residues 263–283 (HFSMLGIGDIVMPGLLLCFVL) form a helical membrane-spanning segment. Asp271 is an active-site residue. Over 284 to 311 (RYDNYKKQASGDSCGAPGPANISGRMQK) the chain is Cytoplasmic. Residues 312-332 (VSYFHCTLIGYFVGLLTATVA) traverse the membrane as a helical segment. Over 333-339 (SRIHRAA) the chain is Lumenal. Residues 340 to 360 (QPALLYLVPFTLLPLLTMAYL) form a helical membrane-spanning segment. The PAL signature appears at 341-343 (PAL). Residues 361–384 (KGDLRRMWSEPFHSKSSSSRFLEV) lie on the Cytoplasmic side of the membrane.

Belongs to the peptidase A22B family. As to quaternary structure, monomer. Homodimer. Interacts with STIM1 (via transmembrane region and SOAR/CAD domain); the interaction promotes the binding of STIM1 to ORAI1. Post-translationally, not glycosylated.

Its subcellular location is the endoplasmic reticulum membrane. The protein resides in the golgi apparatus. It localises to the membrane. Its activity is regulated as follows. Its proteolytic activity is blocked by a signal peptide peptidase (SPP) inhibitor, (ZLL)2-ketone (ZLL) or a gamma-secretase inhibitor, LY411,575. In terms of biological role, intramembrane-cleaving aspartic protease (I-CLiP) that cleaves type II membrane protein substrates in or close to their luminal transmembrane domain boundaries. Acts like a sheddase by mediating the proteolytic release and secretion of active site-containing ectodomains of glycan-modifiying glycosidase and glycosyltransferase enzymes such as MGAT5, B4GAT1 and B4GALT1. Plays a role in the regulation of cellular glycosylation processes. Required to link T-cell antigen receptor (TCR) and calcineurin-NFAT signaling cascades in lymphocytes by promoting the association of STIM1 and ORAI1 during store-operated calcium entry (SOCE) in a protease-independent manner. This Mus musculus (Mouse) protein is Signal peptide peptidase-like 3.